A 681-amino-acid polypeptide reads, in one-letter code: PWWP domain-containing DNA repair factor 3B (681 aa).

Polar residues predominate over residues 102–121; it reads NLSQESMSEEQPTATASENV. Disordered regions lie at residues 102–144, 166–200, and 285–304; these read NLSQ…TQED, HTTGESMPSEMDTKATENLGCCQTDPSLADEDDKK, and QNQSSVESDVGAETSTAGCS. Residue Ser-128 is modified to Phosphoserine. Polar residues predominate over residues 285-302; the sequence is QNQSSVESDVGAETSTAG. The region spanning 377–438 is the PWWP domain; the sequence is TGMIVWFKYQ…KKYDCKEKQA (62 aa).

Belongs to the PWWP3A family.

This Mus musculus (Mouse) protein is PWWP domain-containing DNA repair factor 3B (Pwwp3b).